The following is a 227-amino-acid chain: AN1-type zinc finger protein 3 (227 aa).

An A20-type zinc finger spans residues 12–44 (PSLPPRCPCGFWGSSKTMNLCSKCFADFQKKQP). Zn(2+) is bound by residues Cys-18, Cys-20, Cys-32, and Cys-35. 2 disordered regions span residues 41 to 100 (KKQP…EECG) and 113 to 148 (PTKR…ETSR). Over residues 49 to 59 (APSTSNSQSDL) the composition is skewed to polar residues. Residues 66–77 (SDNNNTSITTPT) show a composition bias toward low complexity. Polar residues-rich tracts occupy residues 78–94 (LSPS…VTSP) and 113–127 (PTKR…SENE). Over residues 135–148 (RLLENTERSEETSR) the composition is skewed to basic and acidic residues. The segment at 151-200 (QKSRRRCFQCQTKLELVQQELGSCRCGYVFCMLHRLPEQHDCTFDHMGRG) adopts an AN1-type zinc-finger fold. The Zn(2+) site is built by Cys-157, Cys-160, Cys-174, Cys-176, Cys-181, His-184, His-190, and Cys-192.

The sequence is that of AN1-type zinc finger protein 3 (ZFAND3) from Homo sapiens (Human).